Reading from the N-terminus, the 137-residue chain is ATP synthase epsilon chain (137 aa).

This sequence belongs to the ATPase epsilon chain family. As to quaternary structure, F-type ATPases have 2 components, CF(1) - the catalytic core - and CF(0) - the membrane proton channel. CF(1) has five subunits: alpha(3), beta(3), gamma(1), delta(1), epsilon(1). CF(0) has three main subunits: a, b and c.

It is found in the cell membrane. Its function is as follows. Produces ATP from ADP in the presence of a proton gradient across the membrane. This is ATP synthase epsilon chain from Streptococcus agalactiae serotype Ia (strain ATCC 27591 / A909 / CDC SS700).